The following is a 601-amino-acid chain: Oligoendopeptidase F, plasmid (601 aa).

His387 is a binding site for Zn(2+). Glu388 is an active-site residue. Zn(2+) is bound by residues His391 and His394.

Belongs to the peptidase M3B family. Zn(2+) serves as cofactor.

Functionally, hydrolyzes peptides containing between 7 and 17 amino acids with a rather wide specificity. The protein is Oligoendopeptidase F, plasmid (pepF1) of Lactococcus lactis subsp. cremoris (Streptococcus cremoris).